The sequence spans 476 residues: TOM1-like protein 1 (476 aa).

The 133-residue stretch at 22 to 154 (ATFAGVQTED…DLVKKGVQFP (133 aa)) folds into the VHS domain. Positions 155-179 (PSEAEAETARQETAQISSNPPTSVP) are disordered. A compositionally biased stretch (polar residues) spans 170-179 (ISSNPPTSVP). Ser171 is modified (phosphoserine). A GAT domain is found at 200–288 (EQIGKLHSEL…AILGYERFTR (89 aa)). Positions 298–314 (KNQKEATNTTSEPSAPS) are enriched in polar residues. The segment at 298–327 (KNQKEATNTTSEPSAPSQDLLDLSPSPRMP) is disordered. 3 positions are modified to phosphoserine: Ser314, Ser321, and Ser323. The interval 392–395 (YDNF) is interaction with GRB2. Residues 421-425 (LPPLP) carry the SH3-binding motif. Positions 442-445 (YEVM) are interaction with PIK3R1. Tyr460 bears the Phosphotyrosine mark. The SH2-binding motif lies at 460–463 (YEEI).

It belongs to the TOM1 family. In terms of assembly, interacts with FYN, GRB2 and PIK3R1 when phosphorylated. Interacts with LYN. Phosphorylated on tyrosines by FYN and LYN.

It is found in the golgi apparatus. It localises to the golgi stack. Its subcellular location is the endosome membrane. The protein localises to the cytoplasm. The protein resides in the membrane. Its function is as follows. Probable adapter protein involved in signaling pathways. Interacts with the SH2 and SH3 domains of various signaling proteins when it is phosphorylated. May promote FYN activation, possibly by disrupting intramolecular SH3-dependent interactions. This chain is TOM1-like protein 1 (TOM1L1), found in Homo sapiens (Human).